A 282-amino-acid chain; its full sequence is Centromere protein P (282 aa).

A coiled-coil region spans residues 1 to 80; sequence MEQKYEEDIQ…KDLRRQTEIN (80 aa).

Belongs to the CENP-P/CTF19 family.

It localises to the nucleus. The protein localises to the chromosome. Its subcellular location is the centromere. In terms of biological role, probable component of a centromeric complex involved in assembly of kinetochore proteins, mitotic progression and chromosome segregation. The polypeptide is Centromere protein P (cenpp) (Danio rerio (Zebrafish)).